Here is a 382-residue protein sequence, read N- to C-terminus: Alkanesulfonate monooxygenase (382 aa).

Belongs to the SsuD family. Homotetramer.

It catalyses the reaction an alkanesulfonate + FMNH2 + O2 = an aldehyde + FMN + sulfite + H2O + 2 H(+). Functionally, catalyzes the desulfonation of aliphatic sulfonates. The chain is Alkanesulfonate monooxygenase from Buttiauxella sp. (strain PNBS).